The chain runs to 513 residues: Probable WRKY transcription factor 3 (513 aa).

Positions 1–11 (MAEKEEKEPSK) are enriched in basic and acidic residues. Disordered stretches follow at residues 1–26 (MAEKEEKEPSKLKSSTGVSRPTISLP), 175–281 (NVHM…PACP), and 297–394 (IIYK…VASS). Residues 179 to 201 (QQSQQSEYPSSTQQQQQQQQQAS) are compositionally biased toward low complexity. Positions 202 to 228 (LTEIPSFSSAPRSQIRASVQETSQGQR) are enriched in polar residues. Positions 229 to 240 (ETSEISVFEHRS) are enriched in basic and acidic residues. The WRKY 1 DNA-binding region spans 244-308 (NADKPADDGY…YKGQHNHELP (65 aa)). Polar residues-rich tracts occupy residues 311–335 (RGNNNGSCKSSDIANQFQTSNSSLN) and 343–355 (TSQVTTTEQMSEA). Over residues 368–387 (VGERHEDEPDPKRRNTEVRV) the composition is skewed to basic and acidic residues. The WRKY 2 DNA-binding region spans 409 to 474 (SEVDLLDDGY…YEGKHNHDVP (66 aa)).

In terms of tissue distribution, in young, mature and senescent leaves.

It is found in the nucleus. Its function is as follows. Transcription factor. Interacts specifically with the W box (5'-(T)TGAC[CT]-3'), a frequently occurring elicitor-responsive cis-acting element. The chain is Probable WRKY transcription factor 3 (WRKY3) from Arabidopsis thaliana (Mouse-ear cress).